The sequence spans 875 residues: Phosphoenolpyruvate carboxylase (875 aa).

Active-site residues include His137 and Lys542.

Belongs to the PEPCase type 1 family. Requires Mg(2+) as cofactor.

The catalysed reaction is oxaloacetate + phosphate = phosphoenolpyruvate + hydrogencarbonate. Functionally, forms oxaloacetate, a four-carbon dicarboxylic acid source for the tricarboxylic acid cycle. This Pseudomonas putida (strain ATCC 47054 / DSM 6125 / CFBP 8728 / NCIMB 11950 / KT2440) protein is Phosphoenolpyruvate carboxylase.